A 488-amino-acid polypeptide reads, in one-letter code: Calcium/calmodulin-dependent protein kinase type II subunit delta (488 aa).

N-acetylalanine is present on A2. In terms of domain architecture, Protein kinase spans 14 to 272; that stretch reads YQLFEELGKG…ASEALKHPWI (259 aa). ATP contacts are provided by residues 20–28 and K43; that span reads LGKGAFSVV. The active-site Proton acceptor is the D136. The tract at residues 283–292 is autoinhibitory domain; the sequence is HRQETVDCLK. T287 is modified (phosphothreonine; by autocatalysis). The interval 291-301 is calmodulin-binding; it reads LKKFNARRKLK. 2 positions are modified to phosphothreonine; by autocatalysis: T306 and T307. Position 315 is a phosphoserine (S315). K317 carries the post-translational modification N6-acetyllysine. 2 positions are modified to phosphoserine: S318 and S340. Residues 325 to 350 are disordered; the sequence is GVKKRKSSSSVQMMESTESSNTTIED. A compositionally biased stretch (polar residues) spans 332–347; that stretch reads SSSVQMMESTESSNTT. The residue at position 341 (T341) is a Phosphothreonine. At S343 the chain carries Phosphoserine. Phosphothreonine occurs at positions 346 and 347. S414 carries the phosphoserine modification.

It belongs to the protein kinase superfamily. CAMK Ser/Thr protein kinase family. CaMK subfamily. As to quaternary structure, CAMK2 is composed of 4 different chains: alpha (CAMK2A), beta (CAMK2B), gamma (CAMK2G), and delta (CAMK2D). The different isoforms assemble into homo- or heteromultimeric holoenzymes composed of 12 subunits with two hexameric rings stacked one on top of the other. Interacts with RRAD and CACNB2. In terms of processing, autophosphorylation of Thr-287 following activation by Ca(2+)/calmodulin. Phosphorylation of Thr-287 locks the kinase into an activated state.

The protein resides in the cell membrane. Its subcellular location is the sarcolemma. It is found in the sarcoplasmic reticulum membrane. It carries out the reaction L-seryl-[protein] + ATP = O-phospho-L-seryl-[protein] + ADP + H(+). The enzyme catalyses L-threonyl-[protein] + ATP = O-phospho-L-threonyl-[protein] + ADP + H(+). With respect to regulation, activated by Ca(2+)/calmodulin. Binding of calmodulin results in conformational change that relieves intrasteric autoinhibition and allows autophosphorylation of Thr-287 which turns the kinase in a constitutively active form and confers to the kinase a Ca(2+)-independent activity. Functionally, calcium/calmodulin-dependent protein kinase involved in the regulation of Ca(2+) homeostatis and excitation-contraction coupling (ECC) in heart by targeting ion channels, transporters and accessory proteins involved in Ca(2+) influx into the myocyte, Ca(2+) release from the sarcoplasmic reticulum (SR), SR Ca(2+) uptake and Na(+) and K(+) channel transport. Targets also transcription factors and signaling molecules to regulate heart function. In its activated form, is involved in the pathogenesis of dilated cardiomyopathy and heart failure. Contributes to cardiac decompensation and heart failure by regulating SR Ca(2+) release via direct phosphorylation of RYR2 Ca(2+) channel on 'Ser-2808'. In the nucleus, phosphorylates the MEF2 repressor HDAC4, promoting its nuclear export and binding to 14-3-3 protein, and expression of MEF2 and genes involved in the hypertrophic program. Is essential for left ventricular remodeling responses to myocardial infarction. In pathological myocardial remodeling acts downstream of the beta adrenergic receptor signaling cascade to regulate key proteins involved in ECC. Regulates Ca(2+) influx to myocytes by binding and phosphorylating the L-type Ca(2+) channel subunit beta-2 CACNB2. In addition to Ca(2+) channels, can target and regulate the cardiac sarcolemmal Na(+) channel Nav1.5/SCN5A and the K+ channel Kv4.3/KCND3, which contribute to arrhythmogenesis in heart failure. Phosphorylates phospholamban (PLN/PLB), an endogenous inhibitor of SERCA2A/ATP2A2, contributing to the enhancement of SR Ca(2+) uptake that may be important in frequency-dependent acceleration of relaxation (FDAR) and maintenance of contractile function during acidosis. May participate in the modulation of skeletal muscle function in response to exercise, by regulating SR Ca(2+) transport through phosphorylation of PLN/PLB and triadin, a ryanodine receptor-coupling factor. In response to interferon-gamma (IFN-gamma) stimulation, catalyzes phosphorylation of STAT1, stimulating the JAK-STAT signaling pathway. This Bos taurus (Bovine) protein is Calcium/calmodulin-dependent protein kinase type II subunit delta (CAMK2D).